A 358-amino-acid polypeptide reads, in one-letter code: 4-hydroxy-3-methylbut-2-en-1-yl diphosphate synthase (flavodoxin) (358 aa).

Residues Cys265, Cys268, Cys300, and Glu307 each contribute to the [4Fe-4S] cluster site.

The protein belongs to the IspG family. [4Fe-4S] cluster serves as cofactor.

It carries out the reaction (2E)-4-hydroxy-3-methylbut-2-enyl diphosphate + oxidized [flavodoxin] + H2O + 2 H(+) = 2-C-methyl-D-erythritol 2,4-cyclic diphosphate + reduced [flavodoxin]. It participates in isoprenoid biosynthesis; isopentenyl diphosphate biosynthesis via DXP pathway; isopentenyl diphosphate from 1-deoxy-D-xylulose 5-phosphate: step 5/6. Functionally, converts 2C-methyl-D-erythritol 2,4-cyclodiphosphate (ME-2,4cPP) into 1-hydroxy-2-methyl-2-(E)-butenyl 4-diphosphate. The polypeptide is 4-hydroxy-3-methylbut-2-en-1-yl diphosphate synthase (flavodoxin) (Maridesulfovibrio salexigens (strain ATCC 14822 / DSM 2638 / NCIMB 8403 / VKM B-1763) (Desulfovibrio salexigens)).